A 123-amino-acid chain; its full sequence is Putative EG45-like domain containing protein 1 (123 aa).

The N-terminal stretch at 1–21 (MSKSIVFFSTVLVFLFSFSYA) is a signal peptide. The 100-residue stretch at 24–123 (GIATFYTSYT…AGIINIDYFP (100 aa)) folds into the Expansin-like EG45 domain.

It localises to the secreted. Functionally, might have a systemic role in water and solute homeostasis. The polypeptide is Putative EG45-like domain containing protein 1 (EGC1) (Arabidopsis thaliana (Mouse-ear cress)).